Here is a 272-residue protein sequence, read N- to C-terminus: Cyclase-like protein 2 (272 aa).

Residues 1-17 (MAHLATVVLLLVAAARQ) form the signal peptide.

This sequence belongs to the Cyclase 1 superfamily. As to expression, highly expressed in leaf sheaths and flag leaves. Expressed in roots, stems, leaf collars, glumes, young panicles and pistils.

The protein resides in the secreted. Its subcellular location is the extracellular space. The protein localises to the extracellular matrix. Its function is as follows. May be involved in response to stresses. In Oryza sativa subsp. japonica (Rice), this protein is Cyclase-like protein 2.